Here is a 181-residue protein sequence, read N- to C-terminus: Adenine phosphoribosyltransferase (181 aa).

This sequence belongs to the purine/pyrimidine phosphoribosyltransferase family. Homodimer.

It localises to the cytoplasm. It catalyses the reaction AMP + diphosphate = 5-phospho-alpha-D-ribose 1-diphosphate + adenine. The protein operates within purine metabolism; AMP biosynthesis via salvage pathway; AMP from adenine: step 1/1. Functionally, catalyzes a salvage reaction resulting in the formation of AMP, that is energically less costly than de novo synthesis. The sequence is that of Adenine phosphoribosyltransferase from Chromohalobacter salexigens (strain ATCC BAA-138 / DSM 3043 / CIP 106854 / NCIMB 13768 / 1H11).